Reading from the N-terminus, the 855-residue chain is Pre-mRNA-splicing factor SYF1 (855 aa).

9 HAT repeats span residues 15-47 (LVFEEEDLPYEEEIMRNQFSVKCWLRYIEFKQG), 48-80 (APKPRLNQLYERALKLLPCSYKLWYRYLKARRA), 90-122 (PAYEDVNNCHERAFVFMHKMPRLWLDYCQFLMD), 124-158 (GRVTHTRRTFDRALRALPITQHSRIWPLYLRFLRS), 160-192 (PLPETAVRGYRRFLKLSPESAEEYIEYLKSSDR), 198-230 (QRLATVVNDERFVSKAGKSNYQLWHELCDLISQ), 235-268 (VQSLNVDAIIRGGLTRFTDQLGKLWCSLADYYIR), 270-305 (GHFEKARDVYEEAIRTVMTVRDFTQVFDSYAQFEES), and 369-407 (GRPREIINTYTEAVQTVDPFKATGKPHTLWVAFAKFYED). At Lys420 the chain carries N6-acetyllysine. HAT repeat units lie at residues 498-530 (GTFQSTKAVYDRILDLRIATPQIVINYAMFLEE), 532-566 (KYFEESFKAYERGISLFKWPNVSDIWSTYLTKFIA), 571-605 (RKLERARDLFEQALDGCPPKYAKTLYLLYAQLEEE), 643-677 (YGVTHTRGIYQKAIEVLSDEHAREMCLRFADMECK), and 679-713 (GEIDRARAIYSFCSQICDPRTTGAFWQTWKDFEVR). Residues 810 to 855 (LAQQVNPEEIQLGEDEDEDEMDLEPNEVRLEQQSVPAAVFGSLKED) form a disordered region. Acidic residues predominate over residues 820–834 (QLGEDEDEDEMDLEP). A Phosphoserine modification is found at Ser851.

This sequence belongs to the crooked-neck family. As to quaternary structure, associates with RNA polymerase II, the TCR-specific proteins CKN1/CSA and ERCC6/CSB, and XPA. Identified in the spliceosome C complex. Component of the XAB2 complex, a multimeric protein complex composed of XAB2, PRPF19, AQR, ZNF830, ISY1, and PPIE. Identified in a pentameric intron-binding (IB) complex composed of AQR, XAB2, ISY1, ZNF830 and PPIE that is incorporated into the spliceosome as a preassembled complex. The IB complex does not contain PRPF19.

It is found in the nucleus. Functionally, involved in pre-mRNA splicing as component of the spliceosome. Involved in transcription-coupled repair (TCR), transcription and pre-mRNA splicing. This Homo sapiens (Human) protein is Pre-mRNA-splicing factor SYF1 (XAB2).